The following is a 289-amino-acid chain: Serine/threonine-protein phosphatase Pgam5, mitochondrial (289 aa).

A helical membrane pass occupies residues F7–L23.

It belongs to the phosphoglycerate mutase family. BPG-dependent PGAM subfamily. As to quaternary structure, interacts with Pk92B/ASK1.

It is found in the mitochondrion outer membrane. It catalyses the reaction O-phospho-L-seryl-[protein] + H2O = L-seryl-[protein] + phosphate. It carries out the reaction O-phospho-L-threonyl-[protein] + H2O = L-threonyl-[protein] + phosphate. Functionally, displays phosphatase activity for serine/threonine residues, and dephosphorylates and activates Pk92B kinase. Has apparently no phosphoglycerate mutase activity. This Drosophila simulans (Fruit fly) protein is Serine/threonine-protein phosphatase Pgam5, mitochondrial.